The chain runs to 392 residues: 6-aminohexanoate-dimer hydrolase (392 aa).

Positions 1-22 are disordered; it reads MNARSTGQHPARYPGAAAGEPT. The active site involves Ser112.

It carries out the reaction [N-(6-aminohexanoyl)](n) + H2O = [N-(6-aminohexanoyl)](n-1) + 6-aminohexanoate. The catalysed reaction is N-(6-aminohexanoyl)-6-aminohexanoate + H2O = 2 6-aminohexanoate. It participates in xenobiotic degradation; nylon-6 oligomer degradation. Functionally, involved in nylon oligomer degradation. In Paenarthrobacter ureafaciens, this protein is 6-aminohexanoate-dimer hydrolase.